Here is a 90-residue protein sequence, read N- to C-terminus: Small ribosomal subunit protein bS16 (90 aa).

This sequence belongs to the bacterial ribosomal protein bS16 family.

The sequence is that of Small ribosomal subunit protein bS16 from Lactobacillus delbrueckii subsp. bulgaricus (strain ATCC 11842 / DSM 20081 / BCRC 10696 / JCM 1002 / NBRC 13953 / NCIMB 11778 / NCTC 12712 / WDCM 00102 / Lb 14).